We begin with the raw amino-acid sequence, 79 residues long: DNA-directed RNA polymerase subunit omega (79 aa).

This sequence belongs to the RNA polymerase subunit omega family. As to quaternary structure, in cyanobacteria the RNAP catalytic core is composed of 2 alpha, 1 beta, 1 beta', 1 gamma and 1 omega subunit. When a sigma factor is associated with the core the holoenzyme is formed, which can initiate transcription.

It carries out the reaction RNA(n) + a ribonucleoside 5'-triphosphate = RNA(n+1) + diphosphate. Its function is as follows. Promotes RNA polymerase assembly. Latches the N- and C-terminal regions of the beta' subunit thereby facilitating its interaction with the beta and alpha subunits. This chain is DNA-directed RNA polymerase subunit omega, found in Synechococcus sp. (strain JA-3-3Ab) (Cyanobacteria bacterium Yellowstone A-Prime).